We begin with the raw amino-acid sequence, 306 residues long: MSRPRKRWRDVDGVFLLDKPQGMSSNDIMQKVKRLFQANKAGHTGALDPLATGMLPICLGEATKFSQFLLDADKRYLVTAKLGERTDTSDAEGQVVETREVHVETPQILTALEQFRGDILQVPTMFSALKHNGKPLYEYARQGITVEREARPITIFELNFIEYHAPFLTLEVHCSKGTYIRTLVDDLGEVLGCGAHVTMLRRTAVADYPVAEMMPINELQLLAESFPLSELDRLLLPTDTAVSKLPALHLDVEQSKAIGFGQRVKFANEQQLSGQVRLFSAENLFLGVALIDGNIIRPQRLITQSA.

Asp48 (nucleophile) is an active-site residue.

This sequence belongs to the pseudouridine synthase TruB family. Type 1 subfamily.

It carries out the reaction uridine(55) in tRNA = pseudouridine(55) in tRNA. Responsible for synthesis of pseudouridine from uracil-55 in the psi GC loop of transfer RNAs. In Haemophilus influenzae (strain PittEE), this protein is tRNA pseudouridine synthase B.